A 784-amino-acid chain; its full sequence is Homoaconitase, mitochondrial (784 aa).

The N-terminal 32 residues, 1–32 (MIHPVRRALAVAASRAPRQFLAAASRTTSVRS), are a transit peptide targeting the mitochondrion. [4Fe-4S] cluster-binding residues include cysteine 399, cysteine 468, and cysteine 471. The tract at residues 572-596 (EAGLTPESTSSSSSSSSSSEEESLT) is disordered. Positions 578–589 (ESTSSSSSSSSS) are enriched in low complexity.

It belongs to the aconitase/IPM isomerase family. It depends on [4Fe-4S] cluster as a cofactor.

It is found in the mitochondrion. The catalysed reaction is (2R,3S)-homoisocitrate = cis-homoaconitate + H2O. It functions in the pathway amino-acid biosynthesis; L-lysine biosynthesis via AAA pathway; L-alpha-aminoadipate from 2-oxoglutarate: step 3/5. Functionally, catalyzes the reversible hydration of cis-homoaconitate to (2R,3S)-homoisocitrate, a step in the alpha-aminoadipate pathway for lysine biosynthesis. This is Homoaconitase, mitochondrial (lys-4) from Neurospora crassa (strain ATCC 24698 / 74-OR23-1A / CBS 708.71 / DSM 1257 / FGSC 987).